The primary structure comprises 666 residues: Calcium/calmodulin-dependent protein kinase type II subunit beta (666 aa).

The Protein kinase domain maps to 14–272 (YQLYEDIGKG…AHEALKHPWV (259 aa)). Y17 bears the Phosphotyrosine mark. Residues 20–28 (IGKGAFSVV) and K43 contribute to the ATP site. D136 acts as the Proton acceptor in catalysis. An autoinhibitory domain region spans residues 283 to 292 (HRQETVECLK). At T287 the chain carries Phosphothreonine; by autocatalysis. The segment at 291 to 301 (LKKFNARRKLK) is calmodulin-binding. Phosphothreonine; by autocatalysis is present on residues T306 and T307. Positions 349–534 (ADGVKPQTNS…IPGPLPTPSR (186 aa)) are disordered. A compositionally biased stretch (polar residues) spans 354–369 (PQTNSTKNSAAATSPK). Phosphoserine is present on residues S367, S394, and S397. Residues T400 and T401 each carry the phosphothreonine modification. Residues 432 to 447 (LPCPSPAPFSPLPAPS) are compositionally biased toward pro residues. Positions 479–491 (SPALLGPLSSPSP) are enriched in low complexity. Residues 514-531 (PVGPPPCPSPTIPGPLPT) show a composition bias toward pro residues.

It belongs to the protein kinase superfamily. CAMK Ser/Thr protein kinase family. CaMK subfamily. In terms of assembly, CAMK2 is composed of 4 different chains: alpha (CAMK2A), beta (CAMK2B), gamma (CAMK2G), and delta (CAMK2D). The different isoforms assemble into homo- or heteromultimeric holoenzymes composed of 12 subunits with two hexameric rings stacked one on top of the other. Interacts with SYNGAP1 and CAMK2N2. Interacts with MPDZ. Interacts with FOXO3. Interacts (when in a kinase inactive state not associated with calmodulin) with ARC; leading to target ARC to inactive synapses. Interacts with CAMK2N1; this interaction requires CAMK2B activation by Ca(2+). In terms of processing, autophosphorylation of Thr-287 following activation by Ca(2+)/calmodulin. Phosphorylation of Thr-287 locks the kinase into an activated state. Widely expressed. Expressed in adult and fetal brain. Expression is slightly lower in fetal brain. Expressed in skeletal muscle.

It localises to the cytoplasm. Its subcellular location is the cytoskeleton. It is found in the microtubule organizing center. The protein resides in the centrosome. The protein localises to the sarcoplasmic reticulum membrane. It localises to the synapse. It catalyses the reaction L-seryl-[protein] + ATP = O-phospho-L-seryl-[protein] + ADP + H(+). The catalysed reaction is L-threonyl-[protein] + ATP = O-phospho-L-threonyl-[protein] + ADP + H(+). Activated by Ca(2+)/calmodulin. Binding of calmodulin results in conformational change that relieves intrasteric autoinhibition and allows autophosphorylation of Thr-287 which turns the kinase in a constitutively active form and confers to the kinase a Ca(2+)-independent activity. Its function is as follows. Calcium/calmodulin-dependent protein kinase that functions autonomously after Ca(2+)/calmodulin-binding and autophosphorylation, and is involved in dendritic spine and synapse formation, neuronal plasticity and regulation of sarcoplasmic reticulum Ca(2+) transport in skeletal muscle. In neurons, plays an essential structural role in the reorganization of the actin cytoskeleton during plasticity by binding and bundling actin filaments in a kinase-independent manner. This structural function is required for correct targeting of CaMK2A, which acts downstream of NMDAR to promote dendritic spine and synapse formation and maintain synaptic plasticity which enables long-term potentiation (LTP) and hippocampus-dependent learning. In developing hippocampal neurons, promotes arborization of the dendritic tree and in mature neurons, promotes dendritic remodeling. Also regulates the migration of developing neurons. Participates in the modulation of skeletal muscle function in response to exercise. In slow-twitch muscles, is involved in regulation of sarcoplasmic reticulum (SR) Ca(2+) transport and in fast-twitch muscle participates in the control of Ca(2+) release from the SR through phosphorylation of triadin, a ryanodine receptor-coupling factor, and phospholamban (PLN/PLB), an endogenous inhibitor of SERCA2A/ATP2A2. In response to interferon-gamma (IFN-gamma) stimulation, catalyzes phosphorylation of STAT1, stimulating the JAK-STAT signaling pathway. Phosphorylates reticulophagy regulator RETREG1 at 'Ser-151' under endoplasmic reticulum stress conditions which enhances RETREG1 oligomerization and its membrane scission and reticulophagy activity. The polypeptide is Calcium/calmodulin-dependent protein kinase type II subunit beta (CAMK2B) (Homo sapiens (Human)).